An 830-amino-acid chain; its full sequence is Probable mixed-linked glucan synthase 7 (830 aa).

The next 2 helical transmembrane spans lie at 61-81 (LTIF…ITYA) and 98-118 (AATF…MWVL). Aspartate 186 is an active-site residue. A coiled-coil region spans residues 251–279 (ELVRDRRRVRREYEEMRLRIDALQAADAR). Substrate is bound by residues aspartate 367 and aspartate 369. The active site involves aspartate 529. The next 6 helical transmembrane spans lie at 613 to 633 (LFLM…GGGW), 638 to 658 (TPTY…VAVL), 676 to 696 (FWMV…ALKV), 735 to 755 (ALMA…AAAG), 776 to 796 (LPVA…LGLM), and 805 to 825 (PILF…CLLL).

The protein belongs to the glycosyltransferase 2 family. Plant cellulose synthase-like F subfamily. In terms of tissue distribution, expressed in mature pollen.

Its subcellular location is the golgi apparatus membrane. May catalyze both beta-1,3 and beta-1,4 glycosidic linkage on beta-D-glucan. Essential for (1,3;1,4)-beta-D-glucans synthesis in grasses and cereals (Poaceae). The mixed-linked glucans (which are not present in walls of dicotyledons or most other monocotyledonous plants) are particularly important constituents of the walls of the starchy endosperm and aleurone cells of cereal grains such as oats, wheat, rice and barley. They can account for up to 70% by weight of the wall. This is Probable mixed-linked glucan synthase 7 (CSLF7) from Oryza sativa subsp. japonica (Rice).